A 131-amino-acid polypeptide reads, in one-letter code: Large ribosomal subunit protein bL17 (131 aa).

This sequence belongs to the bacterial ribosomal protein bL17 family. In terms of assembly, part of the 50S ribosomal subunit. Contacts protein L32.

This chain is Large ribosomal subunit protein bL17, found in Shewanella sp. (strain ANA-3).